Consider the following 393-residue polypeptide: Putative odorant receptor 69a, isoform B (393 aa).

Residues methionine 1 to arginine 39 are Cytoplasmic-facing. Residues isoleucine 40 to glycine 60 traverse the membrane as a helical segment. Residues tyrosine 61 to aspartate 69 lie on the Extracellular side of the membrane. A helical transmembrane segment spans residues proline 70–glycine 90. The Cytoplasmic segment spans residues threonine 91 to asparagine 138. Residues threonine 139–isoleucine 159 traverse the membrane as a helical segment. At arginine 160–asparagine 208 the chain is on the extracellular side. The chain crosses the membrane as a helical span at residues methionine 209–leucine 229. Residues alanine 230–asparagine 269 lie on the Cytoplasmic side of the membrane. A helical transmembrane segment spans residues phenylalanine 270–methionine 290. The Extracellular portion of the chain corresponds to threonine 291–leucine 305. The chain crosses the membrane as a helical span at residues leucine 306–serine 326. Over glycine 327–tyrosine 365 the chain is Cytoplasmic. The chain crosses the membrane as a helical span at residues lysine 366–phenylalanine 386. At threonine 387–lysine 393 the chain is on the extracellular side.

This sequence belongs to the insect chemoreceptor superfamily. Heteromeric odorant receptor channel (TC 1.A.69) family. Or49a subfamily. In terms of assembly, interacts with Orco. Complexes exist early in the endomembrane system in olfactory sensory neurons (OSNs), coupling these complexes to the conserved ciliary trafficking pathway. Expressed in olfactory sensory neurons in the antenna.

The protein localises to the cell membrane. In terms of biological role, odorant receptor which mediates acceptance or avoidance behavior, depending on its substrates. The odorant receptor repertoire encodes a large collection of odor stimuli that vary widely in identity, intensity, and duration. May form a complex with Orco to form odorant-sensing units, providing sensitive and prolonged odorant signaling and calcium permeability. This chain is Putative odorant receptor 69a, isoform B (Or69a), found in Drosophila melanogaster (Fruit fly).